Reading from the N-terminus, the 264-residue chain is Thymidylate synthase (264 aa).

Arginine 21 is a binding site for dUMP. Histidine 51 contributes to the (6R)-5,10-methylene-5,6,7,8-tetrahydrofolate binding site. Residue 126–127 (RR) coordinates dUMP. Cysteine 146 functions as the Nucleophile in the catalytic mechanism. Residues 166–169 (RSCD), asparagine 177, and 207–209 (HLY) each bind dUMP. Residue aspartate 169 participates in (6R)-5,10-methylene-5,6,7,8-tetrahydrofolate binding. Residue alanine 263 participates in (6R)-5,10-methylene-5,6,7,8-tetrahydrofolate binding.

This sequence belongs to the thymidylate synthase family. Bacterial-type ThyA subfamily. In terms of assembly, homodimer.

It is found in the cytoplasm. The enzyme catalyses dUMP + (6R)-5,10-methylene-5,6,7,8-tetrahydrofolate = 7,8-dihydrofolate + dTMP. It functions in the pathway pyrimidine metabolism; dTTP biosynthesis. In terms of biological role, catalyzes the reductive methylation of 2'-deoxyuridine-5'-monophosphate (dUMP) to 2'-deoxythymidine-5'-monophosphate (dTMP) while utilizing 5,10-methylenetetrahydrofolate (mTHF) as the methyl donor and reductant in the reaction, yielding dihydrofolate (DHF) as a by-product. This enzymatic reaction provides an intracellular de novo source of dTMP, an essential precursor for DNA biosynthesis. The chain is Thymidylate synthase from Yersinia pseudotuberculosis serotype O:1b (strain IP 31758).